A 399-amino-acid chain; its full sequence is Probable dual-specificity RNA methyltransferase RlmN (399 aa).

The Proton acceptor role is filled by glutamate 102. The region spanning 108-385 is the Radical SAM core domain; the sequence is YLDRATVCVS…CTVRVERGVA (278 aa). Cysteine 115 and cysteine 390 are oxidised to a cystine. [4Fe-4S] cluster-binding residues include cysteine 122, cysteine 126, and cysteine 129. Residues 207–208, serine 239, 262–264, and asparagine 347 contribute to the S-adenosyl-L-methionine site; these read GE and SLH. Cysteine 390 (S-methylcysteine intermediate) is an active-site residue.

The protein belongs to the radical SAM superfamily. RlmN family. Requires [4Fe-4S] cluster as cofactor.

It is found in the cytoplasm. The enzyme catalyses adenosine(2503) in 23S rRNA + 2 reduced [2Fe-2S]-[ferredoxin] + 2 S-adenosyl-L-methionine = 2-methyladenosine(2503) in 23S rRNA + 5'-deoxyadenosine + L-methionine + 2 oxidized [2Fe-2S]-[ferredoxin] + S-adenosyl-L-homocysteine. It catalyses the reaction adenosine(37) in tRNA + 2 reduced [2Fe-2S]-[ferredoxin] + 2 S-adenosyl-L-methionine = 2-methyladenosine(37) in tRNA + 5'-deoxyadenosine + L-methionine + 2 oxidized [2Fe-2S]-[ferredoxin] + S-adenosyl-L-homocysteine. Functionally, specifically methylates position 2 of adenine 2503 in 23S rRNA and position 2 of adenine 37 in tRNAs. This Roseiflexus castenholzii (strain DSM 13941 / HLO8) protein is Probable dual-specificity RNA methyltransferase RlmN.